We begin with the raw amino-acid sequence, 363 residues long: Thioredoxin domain-containing protein C13F5.05, mitochondrial (363 aa).

A mitochondrion-targeting transit peptide spans 1–24 (MLFRIPTLFTLFLACFSLVSGVFG). The region spanning 32-141 (NTIELNSKNF…KSLQKFVSDS (110 aa)) is the Thioredoxin domain.

It is found in the mitochondrion. In Schizosaccharomyces pombe (strain 972 / ATCC 24843) (Fission yeast), this protein is Thioredoxin domain-containing protein C13F5.05, mitochondrial.